Here is a 487-residue protein sequence, read N- to C-terminus: Protein nucleotidyltransferase YdiU (487 aa).

Gly-90, Gly-92, Arg-93, Lys-113, Asp-125, Gly-126, Arg-176, and Arg-183 together coordinate ATP. The Proton acceptor role is filled by Asp-252. Residues Asn-253 and Asp-262 each contribute to the Mg(2+) site. Residue Asp-262 participates in ATP binding.

Belongs to the SELO family. The cofactor is Mg(2+). Mn(2+) is required as a cofactor.

The catalysed reaction is L-seryl-[protein] + ATP = 3-O-(5'-adenylyl)-L-seryl-[protein] + diphosphate. It carries out the reaction L-threonyl-[protein] + ATP = 3-O-(5'-adenylyl)-L-threonyl-[protein] + diphosphate. It catalyses the reaction L-tyrosyl-[protein] + ATP = O-(5'-adenylyl)-L-tyrosyl-[protein] + diphosphate. The enzyme catalyses L-histidyl-[protein] + UTP = N(tele)-(5'-uridylyl)-L-histidyl-[protein] + diphosphate. The catalysed reaction is L-seryl-[protein] + UTP = O-(5'-uridylyl)-L-seryl-[protein] + diphosphate. It carries out the reaction L-tyrosyl-[protein] + UTP = O-(5'-uridylyl)-L-tyrosyl-[protein] + diphosphate. Nucleotidyltransferase involved in the post-translational modification of proteins. It can catalyze the addition of adenosine monophosphate (AMP) or uridine monophosphate (UMP) to a protein, resulting in modifications known as AMPylation and UMPylation. In Pseudomonas syringae pv. tomato (strain ATCC BAA-871 / DC3000), this protein is Protein nucleotidyltransferase YdiU.